Consider the following 528-residue polypeptide: GMP synthase [glutamine-hydrolyzing] (528 aa).

In terms of domain architecture, Glutamine amidotransferase type-1 spans alanine 13–aspartate 204. Cysteine 90 functions as the Nucleophile in the catalytic mechanism. Active-site residues include histidine 178 and glutamate 180. The GMPS ATP-PPase domain occupies tryptophan 205 to arginine 403. Serine 232–serine 238 contributes to the ATP binding site.

Homodimer.

The enzyme catalyses XMP + L-glutamine + ATP + H2O = GMP + L-glutamate + AMP + diphosphate + 2 H(+). The protein operates within purine metabolism; GMP biosynthesis; GMP from XMP (L-Gln route): step 1/1. In terms of biological role, catalyzes the synthesis of GMP from XMP. The chain is GMP synthase [glutamine-hydrolyzing] from Synechococcus sp. (strain CC9311).